Consider the following 899-residue polypeptide: Valine--tRNA ligase (899 aa).

The short motif at 60–70 is the 'HIGH' region element; that stretch reads PNVTGVLHMGH. A 'KMSKS' region motif is present at residues 539 to 543; that stretch reads KMSKS. Lys542 serves as a coordination point for ATP. Positions 827–898 form a coiled coil; sequence AGLIDLDEEQ…KQGLEKLAAL (72 aa).

The protein belongs to the class-I aminoacyl-tRNA synthetase family. ValS type 1 subfamily. As to quaternary structure, monomer.

The protein resides in the cytoplasm. It catalyses the reaction tRNA(Val) + L-valine + ATP = L-valyl-tRNA(Val) + AMP + diphosphate. Functionally, catalyzes the attachment of valine to tRNA(Val). As ValRS can inadvertently accommodate and process structurally similar amino acids such as threonine, to avoid such errors, it has a 'posttransfer' editing activity that hydrolyzes mischarged Thr-tRNA(Val) in a tRNA-dependent manner. This is Valine--tRNA ligase from Syntrophotalea carbinolica (strain DSM 2380 / NBRC 103641 / GraBd1) (Pelobacter carbinolicus).